The chain runs to 686 residues: MHAGLLGLSALLQAAEQSARLYTVAYYFTTGRLLWGWLALAVLLPGFLVQALSYLWFRADGHPGHCSLVMLHLLQLGVWKRHWDAALTALQKEPEAPHRGWLQLQEADLSALRLLEALLQTGPHLLLQTYVFLASDFTDIVPGVSTLFSWSSLSWALVSYTRFMGFMKPGHLAMPWAALFCQQLWRMGMLGTRVMSLVLFYKAYHFWVFVVAGAHWLVMTFWLVAQQSDIIDSTCHWRLFNLLVGAVYILCYLSFWDSPSRNRMVTFYMVMLLENTILLLLATDFLQGASWTSLQTIAGVLSGFLIGSVSLVIYYSLLHPKSTDIWQGCLRKSCGIAGGDKTERRASPRATDLAGKRTESSGSCQGASYELTILGKPPTPEQVPPEAGLGTQVAVEDSFLSHHHWLWVKLALKTGNMSKINAAFGDDNPVYCPPAWGLSQQDDLQRKALSAQRELPSSSRHPSTLENSSAFEGVSKAEADPLETSSYVSFASDQQDEAPTQNPAATQGEGTPKEGADAVSGTQGKGTGGQQRGGEGQQSSTLYFSATAEVATSSQQEGSPATLQTAHSGRRLGKSSPAQPASPHPVGLAPFPATMADISPILGTGPCRGFCPSAGFPGRTLSISELEEPLEPTRELSHHAAVGVWMSLPQLRTAHEPCLTSTPKSESIQTDCSCREQMKQEPSFFI.

Transmembrane regions (helical) follow at residues 33 to 53 (LLWG…QALS), 205 to 225 (HFWV…WLVA), 239 to 259 (LFNL…WDSP), 265 to 285 (VTFY…ATDF), and 297 to 317 (IAGV…YYSL). Disordered regions lie at residues 340–362 (DKTE…ESSG), 444–470 (LQRK…NSSA), and 490–589 (FASD…VGLA). 2 stretches are compositionally biased toward polar residues: residues 455–470 (LPSS…NSSA) and 490–509 (FASD…TQGE). A compositionally biased stretch (gly residues) spans 523 to 536 (QGKGTGGQQRGGEG). A compositionally biased stretch (polar residues) spans 550-567 (VATSSQQEGSPATLQTAH).

Belongs to the XK family.

It is found in the cell membrane. This Pan troglodytes (Chimpanzee) protein is XK-related protein 5.